Consider the following 110-residue polypeptide: Nucleotide-binding protein in fmt 3'region (110 aa).

Residue 8–15 coordinates ATP; that stretch reads GLSGAGKT. 57-60 lines the GTP pocket; the sequence is DARA.

This sequence belongs to the RapZ-like family.

Displays ATPase and GTPase activities. The sequence is that of Nucleotide-binding protein in fmt 3'region from Thermus thermophilus.